The chain runs to 623 residues: Leucine-rich repeat, immunoglobulin-like domain and transmembrane domain-containing protein 1 (623 aa).

A signal peptide spans 1-21 (MWVALGMLWLLALGGPHQAWS). Positions 22–59 (FCPSQCSCSLHILSDGSKARTVVCSDPDLTLPPASIPP) constitute an LRRNT domain. Over 22-526 (FCPSQCSCSL…EVVDAEGTQR (505 aa)) the chain is Lumenal. LRR repeat units lie at residues 60 to 81 (DTCK…TFRP), 84 to 105 (RLEQ…MLRG), 108 to 128 (RLRE…AALK), 132 to 153 (QLQL…AVHF), and 156 to 177 (NLTF…LLDT). N156 carries an N-linked (GlcNAc...) asparagine glycan. The LRRCT domain maps to 201–253 (NPWVCDCRLYDLVHLLDGWASNLIFIEARLRCGSPRSLAGVAFSQLELRKCQS). Positions 266–332 (PLGSTVLLRC…SGDYICQAKN (67 aa)) constitute an Ig-like C2-type domain. C275 and C328 are oxidised to a cystine. N-linked (GlcNAc...) asparagine glycans are attached at residues N296 and N455. Residues 430–518 (MVRSLKVVGD…QCVIFSTDEV (89 aa)) form the Fibronectin type-III domain. One copy of the LRR 6 repeat lies at 525 to 548 (QRLINMVVISVAAIIALPPTLLVC). Residues 527–547 (LINMVVISVAAIIALPPTLLV) form a helical membrane-spanning segment. The Cytoplasmic portion of the chain corresponds to 548–623 (CCGALRRRCH…GGRRINEYFC (76 aa)).

As to quaternary structure, homodimer. Interacts with LRIT2; may form a heterodimer with LRIT2. Interacts (via its N-terminal extracellular domain) with metabotropic glutamate receptor GRM6. Interacts (via its extreme C-terminus) with the scaffold protein FRMPD2 (via the third PDZ domain); the interaction leads to their colocalization in photoreceptor synapses. In terms of tissue distribution, retina, outer segments of photoreceptor cells.

It is found in the endoplasmic reticulum membrane. The protein localises to the cell projection. It localises to the dendrite. Photoreceptor synaptic protein essential for normal vision. Involved in synapse formation in cone photoreceptor cells. In Rattus norvegicus (Rat), this protein is Leucine-rich repeat, immunoglobulin-like domain and transmembrane domain-containing protein 1 (Lrit1).